Consider the following 245-residue polypeptide: DNA repair protein RecO (245 aa).

This sequence belongs to the RecO family.

Its function is as follows. Involved in DNA repair and RecF pathway recombination. The polypeptide is DNA repair protein RecO (Klebsiella pneumoniae subsp. pneumoniae (strain ATCC 700721 / MGH 78578)).